Here is a 392-residue protein sequence, read N- to C-terminus: Branched-chain-amino-acid aminotransferase, mitochondrial (392 aa).

The N-terminal 27 residues, 1–27 (MAAAALGQIWARKFLSVPWLLCGPRRY), are a transit peptide targeting the mitochondrion. Tyr-168 contributes to the substrate binding site. Lys-229 is subject to N6-(pyridoxal phosphate)lysine. Lys-321 bears the N6-acetyllysine mark.

Belongs to the class-IV pyridoxal-phosphate-dependent aminotransferase family. Homodimer. Pyridoxal 5'-phosphate serves as cofactor.

Its subcellular location is the mitochondrion. It carries out the reaction L-leucine + 2-oxoglutarate = 4-methyl-2-oxopentanoate + L-glutamate. The enzyme catalyses L-isoleucine + 2-oxoglutarate = (S)-3-methyl-2-oxopentanoate + L-glutamate. It catalyses the reaction L-valine + 2-oxoglutarate = 3-methyl-2-oxobutanoate + L-glutamate. Its function is as follows. Catalyzes the first reaction in the catabolism of the essential branched chain amino acids leucine, isoleucine, and valine. May also function as a transporter of branched chain alpha-keto acids. The sequence is that of Branched-chain-amino-acid aminotransferase, mitochondrial (BCAT2) from Pongo abelii (Sumatran orangutan).